A 106-amino-acid polypeptide reads, in one-letter code: Putative membrane protein insertion efficiency factor (106 aa).

Belongs to the UPF0161 family.

The protein localises to the cell inner membrane. Functionally, could be involved in insertion of integral membrane proteins into the membrane. This Methylacidiphilum infernorum (isolate V4) (Methylokorus infernorum (strain V4)) protein is Putative membrane protein insertion efficiency factor.